Consider the following 324-residue polypeptide: Probable pectinesterase A (324 aa).

The signal sequence occupies residues 1-19 (MHGSLLKLALLSFSLGSSA). Q142 lines the substrate pocket. D165 serves as the catalytic Proton donor. The active-site Nucleophile is D186. Substrate-binding residues include R246 and W248. N285 carries an N-linked (GlcNAc...) asparagine glycan.

This sequence belongs to the pectinesterase family.

Its subcellular location is the secreted. The catalysed reaction is [(1-&gt;4)-alpha-D-galacturonosyl methyl ester](n) + n H2O = [(1-&gt;4)-alpha-D-galacturonosyl](n) + n methanol + n H(+). It participates in glycan metabolism; pectin degradation; 2-dehydro-3-deoxy-D-gluconate from pectin: step 1/5. Involved in maceration and soft-rotting of plant tissue. The sequence is that of Probable pectinesterase A (pmeA) from Aspergillus oryzae (strain ATCC 42149 / RIB 40) (Yellow koji mold).